Here is an 885-residue protein sequence, read N- to C-terminus: Lon protease homolog 2, peroxisomal (885 aa).

One can recognise a Lon N-terminal domain in the interval 12 to 256; the sequence is LAVLPFRNKV…KATELVDRHL (245 aa). A disordered region spans residues 70–104; the sequence is LLSPGVGSDSGEGGSKVGGSAVESSKQDTKNGKEP. Residues 77–86 are compositionally biased toward gly residues; that stretch reads SDSGEGGSKV. The segment covering 94–104 has biased composition (basic and acidic residues); that stretch reads SKQDTKNGKEP. 409–416 is a binding site for ATP; sequence GPPGVGKT. The Lon proteolytic domain occupies 690-875; it reads VASPGVSVGL…EEVLDHAFEG (186 aa). Residues S781 and K824 contribute to the active site. Positions 883 to 885 match the Microbody targeting signal motif; sequence SKL.

It belongs to the peptidase S16 family.

The protein resides in the peroxisome matrix. The enzyme catalyses Hydrolysis of proteins in presence of ATP.. In terms of biological role, ATP-dependent serine protease that mediates the selective degradation of misfolded and unassembled polypeptides in the peroxisomal matrix. Necessary for type 2 peroxisome targeting signal (PTS2)-containing protein processing and facilitates peroxisome matrix protein import. In Zea mays (Maize), this protein is Lon protease homolog 2, peroxisomal (LON1).